Reading from the N-terminus, the 513-residue chain is ATP synthase subunit alpha (513 aa).

169–176 (GDRQCGKT) is an ATP binding site.

The protein belongs to the ATPase alpha/beta chains family. As to quaternary structure, F-type ATPases have 2 components, CF(1) - the catalytic core - and CF(0) - the membrane proton channel. CF(1) has five subunits: alpha(3), beta(3), gamma(1), delta(1), epsilon(1). CF(0) has three main subunits: a(1), b(2) and c(9-12). The alpha and beta chains form an alternating ring which encloses part of the gamma chain. CF(1) is attached to CF(0) by a central stalk formed by the gamma and epsilon chains, while a peripheral stalk is formed by the delta and b chains.

It is found in the cell inner membrane. It carries out the reaction ATP + H2O + 4 H(+)(in) = ADP + phosphate + 5 H(+)(out). Functionally, produces ATP from ADP in the presence of a proton gradient across the membrane. The alpha chain is a regulatory subunit. This is ATP synthase subunit alpha from Burkholderia cenocepacia (strain ATCC BAA-245 / DSM 16553 / LMG 16656 / NCTC 13227 / J2315 / CF5610) (Burkholderia cepacia (strain J2315)).